Here is a 609-residue protein sequence, read N- to C-terminus: Threonine--tRNA ligase (609 aa).

Residues 1–143 (MRVLYIHAER…SFKPEGAKVE (143 aa)) form an editing domain region. Catalytic regions lie at residues 195–491 (PRYL…PRLP) and 196–491 (RYLD…PRLP). Zn(2+) contacts are provided by Cys288, His339, and His460.

The protein belongs to the class-II aminoacyl-tRNA synthetase family. Homodimer. Zn(2+) is required as a cofactor.

Its subcellular location is the cytoplasm. The catalysed reaction is tRNA(Thr) + L-threonine + ATP = L-threonyl-tRNA(Thr) + AMP + diphosphate + H(+). Its function is as follows. Catalyzes the attachment of threonine to tRNA(Thr) in a two-step reaction: L-threonine is first activated by ATP to form Thr-AMP and then transferred to the acceptor end of tRNA(Thr). Also edits incorrectly charged L-seryl-tRNA(Thr). This chain is Threonine--tRNA ligase, found in Pyrobaculum islandicum (strain DSM 4184 / JCM 9189 / GEO3).